Here is a 339-residue protein sequence, read N- to C-terminus: MIILGVESSCDETAAAVVEDGSRVLSDVVASQAALHGPYGGVVPELASRKHVEAILPVLGEAMHEAGVTWGQVDAIAATQGPGLVGALLVGLSAAKALAYALKKPMVAVNHLEGHIQAAFLGREELTRPFVCLVVSGGHTALYRVDPDGTTSFLGSTRDDAAGEAFDKVAKLLALGYPGGVEIERLAAGGDPHAFNFPRAFIDGRSLEFSFSGLKTSVATFVRQHGPPSESGEQGAYRLADLLASFQEAVVEVLVNKTVRAAGMCSVGDIAVVGGVAANLRLRERFEEEAGMHRFELHLPARRYCTDNAVMIAAAAYRTWKRSGFCLDPVDLDARSRWF.

Fe cation-binding residues include histidine 111 and histidine 115. Residues 134-138 (VVSGG), aspartate 167, glycine 180, and asparagine 279 each bind substrate. Aspartate 307 is a binding site for Fe cation.

The protein belongs to the KAE1 / TsaD family. Fe(2+) serves as cofactor.

It localises to the cytoplasm. The enzyme catalyses L-threonylcarbamoyladenylate + adenosine(37) in tRNA = N(6)-L-threonylcarbamoyladenosine(37) in tRNA + AMP + H(+). Its function is as follows. Required for the formation of a threonylcarbamoyl group on adenosine at position 37 (t(6)A37) in tRNAs that read codons beginning with adenine. Is involved in the transfer of the threonylcarbamoyl moiety of threonylcarbamoyl-AMP (TC-AMP) to the N6 group of A37, together with TsaE and TsaB. TsaD likely plays a direct catalytic role in this reaction. The polypeptide is tRNA N6-adenosine threonylcarbamoyltransferase (Syntrophobacter fumaroxidans (strain DSM 10017 / MPOB)).